A 159-amino-acid polypeptide reads, in one-letter code: uncharacterized protein (159 aa).

Residues His-44, His-124, and His-128 each coordinate a divalent metal cation.

This sequence belongs to the DinB family.

This is an uncharacterized protein from Bacillus subtilis (strain 168).